The sequence spans 410 residues: Putative transporter AmpG 1 (410 aa).

The next 12 helical transmembrane spans lie at 5 to 25, 40 to 60, 76 to 96, 98 to 118, 141 to 161, 169 to 189, 217 to 237, 265 to 285, 290 to 310, 320 to 340, 356 to 378, and 383 to 402; these read LSII…TGNT, IGLL…APIF, LSWI…LSFL, PFDN…FSSM, GIYI…AIYL, EIYK…IVGV, ILKP…LILY, VGKF…GFIM, ILDS…LFII, LLFI…TAYI, YSFF…GYIV, and WQNF…LVLL.

This sequence belongs to the major facilitator superfamily.

It is found in the cell inner membrane. This Rickettsia bellii (strain RML369-C) protein is Putative transporter AmpG 1 (ampG1).